The chain runs to 192 residues: Ion-translocating oxidoreductase complex subunit B (192 aa).

The hydrophobic stretch occupies residues 1–26; it reads MTAIWIAIAALSALALAFGLVLGYAS. The 60-residue stretch at 32-91 folds into the 4Fe-4S domain; sequence ENDPIVEEVEAMLPQSQCGQCGYPGCRPYAEAVSLNGESINKCGPGGEAMMLKLAEKLNV. Positions 49, 52, 57, 74, 117, 120, 123, 127, 147, 150, 153, and 157 each coordinate [4Fe-4S] cluster. 2 consecutive 4Fe-4S ferredoxin-type domains span residues 108-137 and 138-167; these read HVAW…GSTK and AVHT…LRPI.

The protein belongs to the 4Fe4S bacterial-type ferredoxin family. RnfB subfamily. The complex is composed of six subunits: RnfA, RnfB, RnfC, RnfD, RnfE and RnfG. The cofactor is [4Fe-4S] cluster.

The protein localises to the cell inner membrane. Part of a membrane-bound complex that couples electron transfer with translocation of ions across the membrane. The protein is Ion-translocating oxidoreductase complex subunit B of Pectobacterium atrosepticum (strain SCRI 1043 / ATCC BAA-672) (Erwinia carotovora subsp. atroseptica).